The following is a 452-amino-acid chain: UDP-glycosyltransferase 79B11 (452 aa).

UDP-alpha-D-glucose is bound by residues Ser-260, 319-325 (VQQPSWQ), 340-348 (HCGFGSMWE), and 362-365 (LNDQ).

The protein belongs to the UDP-glycosyltransferase family.

This chain is UDP-glycosyltransferase 79B11 (UGT79B11), found in Arabidopsis thaliana (Mouse-ear cress).